The following is a 308-amino-acid chain: MFIKVLGSAAGGGFPQWNCNCANCQGLRNGTIQASARTQSSIIVSDNGKEWVLCNASPDISQQIAHTPELNKPGVLRGTSIGGIILTDSQIDHTTGLLSLREGCPHQVWCTPEVHEDLSTGFPVFTMLRHWNGGLVHHPIAPQQPFTVDACPDLQFTAVPIASNAPPYSPYRDRPLPGHNVALFIEYRRNGQTLFYAPGLGEPDEALLPWLQKADCLLIDGTVWQDDELQAAGVGRNTGRDMGHLALSDEHGMMALLASLPAKRKILIHINNTNPILNELSPQRQALKQQGIEVSWDGMAITLQDTAC.

This sequence belongs to the PqqB family.

Its pathway is cofactor biosynthesis; pyrroloquinoline quinone biosynthesis. Its function is as follows. May be involved in the transport of PQQ or its precursor to the periplasm. In Klebsiella pneumoniae (strain 342), this protein is Coenzyme PQQ synthesis protein B.